The chain runs to 549 residues: Probable protein kinase UbiB (549 aa).

The 379-residue stretch at 123-501 folds into the Protein kinase domain; sequence DFNETPLASA…QQQAHKSNYL (379 aa). Residues 129-137 and K152 each bind ATP; that span reads LASASISQV. D287 serves as the catalytic Proton acceptor. A run of 2 helical transmembrane segments spans residues 498-518 and 520-540; these read SNYL…LFNQ and ATLW…IIGW.

Belongs to the ABC1 family. UbiB subfamily.

Its subcellular location is the cell inner membrane. It functions in the pathway cofactor biosynthesis; ubiquinone biosynthesis [regulation]. In terms of biological role, is probably a protein kinase regulator of UbiI activity which is involved in aerobic coenzyme Q (ubiquinone) biosynthesis. The protein is Probable protein kinase UbiB of Shewanella sp. (strain MR-7).